Here is a 1240-residue protein sequence, read N- to C-terminus: DNA-directed RNA polymerase subunit beta (1240 aa).

It belongs to the RNA polymerase beta chain family. As to quaternary structure, the RNAP catalytic core consists of 2 alpha, 1 beta, 1 beta' and 1 omega subunit. When a sigma factor is associated with the core the holoenzyme is formed, which can initiate transcription.

It catalyses the reaction RNA(n) + a ribonucleoside 5'-triphosphate = RNA(n+1) + diphosphate. In terms of biological role, DNA-dependent RNA polymerase catalyzes the transcription of DNA into RNA using the four ribonucleoside triphosphates as substrates. The polypeptide is DNA-directed RNA polymerase subunit beta (Rhodopirellula baltica (strain DSM 10527 / NCIMB 13988 / SH1)).